The primary structure comprises 319 residues: Putative ribose-phosphate pyrophosphokinase 2 (319 aa).

ATP-binding positions include 40–42 and 99–100; these read DGE and RQ. Histidine 133 contacts Mg(2+). D-ribose 5-phosphate is bound by residues aspartate 222 and 226–230; that span reads NTGRT.

The protein belongs to the ribose-phosphate pyrophosphokinase family. Class I subfamily. Homohexamer. It depends on Mg(2+) as a cofactor.

The protein localises to the cytoplasm. It catalyses the reaction D-ribose 5-phosphate + ATP = 5-phospho-alpha-D-ribose 1-diphosphate + AMP + H(+). It participates in metabolic intermediate biosynthesis; 5-phospho-alpha-D-ribose 1-diphosphate biosynthesis; 5-phospho-alpha-D-ribose 1-diphosphate from D-ribose 5-phosphate (route I): step 1/1. Involved in the biosynthesis of the central metabolite phospho-alpha-D-ribosyl-1-pyrophosphate (PRPP) via the transfer of pyrophosphoryl group from ATP to 1-hydroxyl of ribose-5-phosphate (Rib-5-P). This Streptococcus pneumoniae serotype 4 (strain ATCC BAA-334 / TIGR4) protein is Putative ribose-phosphate pyrophosphokinase 2.